The following is a 584-amino-acid chain: MAAPLAQLRDRFQAALAASFGPEWAATDPLLVPATNPKFGDYQSNVAMSLAKQLGQPPRAIAETLVQNLNLADLCEPPAIAGPGFINFTLQPSYLVAQLQQLQTDERLGIQPVSPPQRVIVDFSSPNIAKEMHVGHLRSTIIGDSIARVLEFQGHEVLRLNHVGDWGTQFGMLIAFLQEQYPQALSQPDALDISDLVAFYKQAKARFDEDPSFQETARQRVVDLQSGEATARQAWQLLCDQSRREFQKIYDRLDIQLEERGESFYNPYLPAIVEDLRRLGLLVEDQGAQCVFLEGFQNKEGQPLPLIVQKSDGGYNYATTDLAALRYRLGQDQAQRIIYVTDSGQANHFAQVFQVAQRAGWLPAAAQIEHVPFGLVQGEDGKKLKTRAGDTVRLRDLLDEAVDRARTDLTTRIAAEERSETPEFIEAVAQAVGLGAVKYADLSQNRNSNYIFSFDKMLALQGNTAPYLLYAYVRIQGIARKGGIDFAQLDPVAAELTEPTERSLAKQVLQLGEVLDEVARDLLPNRLCSYLFELSQTFNQFYDRCPILNAEEPQRTSRLLLCDLTARTLKLGLSLLGISVLERM.

A 'HIGH' region motif is present at residues 126–136; that stretch reads PNIAKEMHVGH.

It belongs to the class-I aminoacyl-tRNA synthetase family. As to quaternary structure, monomer.

The protein resides in the cytoplasm. It carries out the reaction tRNA(Arg) + L-arginine + ATP = L-arginyl-tRNA(Arg) + AMP + diphosphate. This chain is Arginine--tRNA ligase, found in Synechococcus sp. (strain ATCC 27144 / PCC 6301 / SAUG 1402/1) (Anacystis nidulans).